The chain runs to 529 residues: Tyrosinase (529 aa).

The first 18 residues, 1–18 (MFLFAMGLLLVILQPSTG), serve as a signal peptide directing secretion. Residues 19–476 (QFPRVCANTQ…YLKQAHQIWP (458 aa)) are Lumenal, melanosome-facing. Residues Asn-86, Asn-111, and Asn-161 are each glycosylated (N-linked (GlcNAc...) asparagine). Positions 180, 202, and 211 each coordinate Cu cation. Asn-230 and Asn-290 each carry an N-linked (GlcNAc...) asparagine glycan. Positions 293–313 (SEGPILRNPGNNDKSRTPRLP) are disordered. N-linked (GlcNAc...) asparagine glycans are attached at residues Asn-337 and Asn-356. Cu cation is bound by residues His-363 and His-367. Asn-371 is a glycosylation site (N-linked (GlcNAc...) asparagine). His-390 serves as a coordination point for Cu cation. The helical transmembrane segment at 477–497 (WLVGAAVIGGIITAVLSGLIL) threads the bilayer. Residues 498-529 (ACRKKRKGTSPEIQPLLTESEDYNNVSYQSHF) lie on the Cytoplasmic side of the membrane.

It belongs to the tyrosinase family. It depends on Cu(2+) as a cofactor.

It is found in the melanosome membrane. Its subcellular location is the melanosome. It carries out the reaction 2 L-dopa + O2 = 2 L-dopaquinone + 2 H2O. The catalysed reaction is L-tyrosine + O2 = L-dopaquinone + H2O. Its function is as follows. This is a copper-containing oxidase that functions in the formation of pigments such as melanins and other polyphenolic compounds. Catalyzes the initial and rate limiting step in the cascade of reactions leading to melanin production from tyrosine. In addition to hydroxylating tyrosine to DOPA (3,4-dihydroxyphenylalanine), also catalyzes the oxidation of DOPA to DOPA-quinone, and possibly the oxidation of DHI (5,6-dihydroxyindole) to indole-5,6 quinone. This Gallus gallus (Chicken) protein is Tyrosinase (TYR).